We begin with the raw amino-acid sequence, 325 residues long: Glutarate 2-hydroxylase (325 aa).

3 residues coordinate Fe cation: His-160, Asp-162, and His-292.

This sequence belongs to the glutarate hydroxylase family. Homotetramer. The cofactor is Fe(2+).

The catalysed reaction is glutarate + 2-oxoglutarate + O2 = (S)-2-hydroxyglutarate + succinate + CO2. The protein operates within amino-acid degradation. Functionally, acts as an alpha-ketoglutarate-dependent dioxygenase catalyzing hydroxylation of glutarate (GA) to L-2-hydroxyglutarate (L2HG). Functions in a L-lysine degradation pathway that proceeds via cadaverine, glutarate and L-2-hydroxyglutarate. The protein is Glutarate 2-hydroxylase of Escherichia coli O7:K1 (strain IAI39 / ExPEC).